We begin with the raw amino-acid sequence, 563 residues long: Probable tRNA (uracil-O(2)-)-methyltransferase (563 aa).

The segment at 536-563 adopts a C3H1-type zinc-finger fold; that stretch reads TIRKAPCWMSLHHPDGCPVGQEACRYEH.

This sequence belongs to the TRM44 family.

It localises to the cytoplasm. It carries out the reaction uridine(44) in tRNA(Ser) + S-adenosyl-L-methionine = 2'-O-methyluridine(44) in tRNA(Ser) + S-adenosyl-L-homocysteine + H(+). Its function is as follows. Probable adenosyl-L-methionine (AdoMet)-dependent tRNA (uracil-O(2)-)-methyltransferase. In Caenorhabditis elegans, this protein is Probable tRNA (uracil-O(2)-)-methyltransferase.